The sequence spans 151 residues: MATLESRLADMLKVPVEALGFQLWGIEYVQAGKHSILRVFIDGENGINIEDCANVSRQVSAVLDVEDPISTEYTLEVSSPGVDRPLFTAEQYAAYVGEDVKLQLTMPVAGSRNLKGAITQVDGQMLSLNVNGKELVVALDNIRKGNIIAKF.

This sequence belongs to the RimP family.

Its subcellular location is the cytoplasm. Functionally, required for maturation of 30S ribosomal subunits. This is Ribosome maturation factor RimP from Shewanella sp. (strain ANA-3).